The sequence spans 1080 residues: Ubiquitin carboxyl-terminal hydrolase 8 (1080 aa).

The MIT domain occupies 33 to 116 (TKNYIHSAQK…ESLKLRYEEA (84 aa)). Residues 119–173 (RKQLEEKDRREEEQLQQQKRQEMGREDSGAAAKRSVENLLDSKTKTQRINGEKSE) are compositionally biased toward basic and acidic residues. Positions 119-176 (RKQLEEKDRREEEQLQQQKRQEMGREDSGAAAKRSVENLLDSKTKTQRINGEKSEGAA) are disordered. Ser-160 carries the post-translational modification Phosphoserine. The 119-residue stretch at 195–313 (KNTSLIIMDA…WLLCYPQFTT (119 aa)) folds into the Rhodanese domain. The segment covering 379-393 (ALAGPGAAPRAEASP) has biased composition (low complexity). Disordered regions lie at residues 379-455 (ALAG…TDEE), 468-605 (EKNK…RSEE), and 642-710 (PPEM…KPPC). Phosphoserine is present on Ser-392. An SH3-binding motif is present at residues 405-413 (PQVDRTKKP). Positions 417 to 427 (LPEDHRIKSEN) are enriched in basic and acidic residues. Phosphoserine is present on Ser-446. Basic and acidic residues-rich tracts occupy residues 468–535 (EKNK…RELS), 549–577 (SKSE…KRPA), and 593–605 (AQRE…RSEE). Residue Thr-569 is modified to Phosphothreonine. Positions 678–688 (SYSSPDITQAL) are enriched in polar residues. Phosphoserine is present on residues Ser-680 and Ser-681. The USP domain maps to 739–1071 (TGLRNLGNTC…AAYILFYTSL (333 aa)). The active-site Nucleophile is the Cys-748. Position 907 is a phosphothreonine (Thr-907). The active-site Proton acceptor is His-1029.

This sequence belongs to the peptidase C19 family. As to quaternary structure, forms a ternary complex with RNF128 and OTUB1. Interacts (via C-terminal UCH catalytic domain) with OTUB1 isoform 1. Interacts with STAM2 (via SH3 domain). Interacts with DNAJB3, EGFR, EPS15, RASGRF1, RNF41, YWHAE, YWHAG and YWHAZ. Interacts with NBR1, RASGRF1, RNF41 and IST1. Associates with the ESCRT-0 complex and with microtubules. Interacts with BIRC6/bruce and KIF23/MKLP1. Phosphorylation of Ser-680 is essential for interaction with YWHAE and for cytosol localization. Undergoes dephosphorylation at Ser-680 in the M phase. Tyrosine-phosphorylated in its N-terminal half in an EGFR-dependent manner. Post-translationally, ubiquitinated. Inactive form is mostly monoubiquitinated, but polyubiquitination happens too. Ubiquitination is increased in EGF-stimulated cells. Ubiquitination of active form is undetectable, suggesting a possibility that USP8 deubiquitinates itself, thereby regulating its own function. As to expression, highly expressed in testis. Expressed at intermediate level in brain.

It is found in the cytoplasm. It localises to the nucleus. Its subcellular location is the endosome membrane. The protein resides in the cell membrane. It carries out the reaction Thiol-dependent hydrolysis of ester, thioester, amide, peptide and isopeptide bonds formed by the C-terminal Gly of ubiquitin (a 76-residue protein attached to proteins as an intracellular targeting signal).. Its function is as follows. Hydrolase that can remove conjugated ubiquitin from proteins and therefore plays an important regulatory role at the level of protein turnover by preventing degradation. Converts both 'Lys-48' an 'Lys-63'-linked ubiquitin chains. Catalytic activity is enhanced in the M phase. Involved in cell proliferation. Required to enter into S phase in response to serum stimulation. May regulate T-cell anergy mediated by RNF128 via the formation of a complex containing RNF128 and OTUB1. Probably regulates the stability of STAM2 and RASGRF1. Regulates endosomal ubiquitin dynamics, cargo sorting, membrane traffic at early endosomes, and maintenance of ESCRT-0 stability. The level of protein ubiquitination on endosomes is essential for maintaining the morphology of the organelle. Deubiquitinates EPS15 and controls tyrosine kinase stability. Removes conjugated ubiquitin from EGFR thus regulating EGFR degradation and downstream MAPK signaling. Involved in acrosome biogenesis through interaction with the spermatid ESCRT-0 complex and microtubules. Deubiquitinates BIRC6/bruce and KIF23/MKLP1. Deubiquitinates BACE1 which inhibits BACE1 lysosomal degradation and modulates BACE-mediated APP cleavage and amyloid-beta formation. This is Ubiquitin carboxyl-terminal hydrolase 8 from Mus musculus (Mouse).